Here is a 166-residue protein sequence, read N- to C-terminus: Twist-related protein (166 aa).

Over residues 1–18 (MMQEESSSPVSPVDSLSN) the composition is skewed to low complexity. Residues 1–83 (MMQEESSSPV…RVMANVRERQ (83 aa)) are disordered. Positions 28-39 (SKRGCRKRRSAR) are enriched in basic residues. A compositionally biased stretch (polar residues) spans 57 to 75 (ASSTGSSPQSFEELQSQRV). The region spanning 72–123 (SQRVMANVRERQRTQSLNEAFSSLRKIIPTLPSDKLSKIQTLKLASRYIDFL) is the bHLH domain.

As to quaternary structure, efficient DNA binding requires dimerization with another bHLH protein. Homodimer. Subset of mesodermal cells.

It is found in the nucleus. Functionally, probable transcription factor, which may be involved, with other proteins, in establishing the pattern of cell type-specific gene expression in mesodermal cell subgroups. This is Twist-related protein (twist1) from Xenopus laevis (African clawed frog).